We begin with the raw amino-acid sequence, 51 residues long: Large ribosomal subunit protein bL33 (51 aa).

Belongs to the bacterial ribosomal protein bL33 family.

This is Large ribosomal subunit protein bL33 from Acidithiobacillus ferrooxidans (strain ATCC 53993 / BNL-5-31) (Leptospirillum ferrooxidans (ATCC 53993)).